Consider the following 342-residue polypeptide: Anthranilate phosphoribosyltransferase (342 aa).

5-phospho-alpha-D-ribose 1-diphosphate-binding positions include glycine 74, 77 to 78 (GD), threonine 82, 84 to 87 (NVST), 101 to 109 (KHGNRSVSG), and serine 113. An anthranilate-binding site is contributed by glycine 74. A Mg(2+)-binding site is contributed by serine 86. Asparagine 104 is a binding site for anthranilate. Arginine 159 is a binding site for anthranilate. Mg(2+) is bound by residues aspartate 218 and glutamate 219.

Belongs to the anthranilate phosphoribosyltransferase family. As to quaternary structure, homodimer. Mg(2+) is required as a cofactor.

The catalysed reaction is N-(5-phospho-beta-D-ribosyl)anthranilate + diphosphate = 5-phospho-alpha-D-ribose 1-diphosphate + anthranilate. It participates in amino-acid biosynthesis; L-tryptophan biosynthesis; L-tryptophan from chorismate: step 2/5. Catalyzes the transfer of the phosphoribosyl group of 5-phosphorylribose-1-pyrophosphate (PRPP) to anthranilate to yield N-(5'-phosphoribosyl)-anthranilate (PRA). The chain is Anthranilate phosphoribosyltransferase from Sulfolobus acidocaldarius (strain ATCC 33909 / DSM 639 / JCM 8929 / NBRC 15157 / NCIMB 11770).